The primary structure comprises 165 residues: Ubiquitin-like protein ISG15 (165 aa).

2 Ubiquitin-like domains span residues 2 to 78 (GWDL…VDKC) and 79 to 157 (DEPL…LRGG). The residue at position 78 (Cys78) is an S-nitrosocysteine; alternate. Residues 152 to 157 (LRLRGG) carry the LRLRGG motif. Residues 153–157 (RLRGG) are involved in the ligation of specific target proteins. A Glycyl lysine isopeptide (Gly-Lys) (interchain with K-? in acceptor proteins) cross-link involves residue Gly157. Residues 158 to 165 (GTEPGGRS) constitute a propeptide, removed in mature form.

As to quaternary structure, homodimer; disulfide-linked. Interacts with, and is conjugated to its targets by UBE1L (E1 enzyme) and UBE2E2 (E2 enzyme). Interacts with NEDD4. Interacts with PARP12; this interaction inhibits PINK1/Parkin-dependent mitophagy. (Microbial infection) Interacts with vaccinia virus protein E3. In terms of assembly, (Microbial infection) Interaction with influenza B NS1 protein inhibits its conjugation. As to quaternary structure, (Microbial infection) Interacts (via C-terminus) with Crimean-Congo hemorrhagic fever virus (CCHFV) RNA-directed RNA polymerase L (via N-terminus); the deISGylase activity of the viral protein interferes with antiviral signaling pathways mediated by NF-kappaB and IRF signalings. (Microbial infection) Interacts with human cytomegalovirus protein UL26; this interaction inhibits global protein ISGylation. In terms of processing, S-nitrosylation decreases its dimerization, thereby increasing the availability as well as the solubility of monomeric ISG15 for its conjugation to cellular proteins. Induced as an inactive, precursor protein that is cleaved by specific proteases to expose the C-terminal diglycine (LRLRGG) motif. This motif is essential not only for its conjugation to substrates but also for its recognition by the relevant processing proteases. Detected in lymphoid cells, striated and smooth muscle, several epithelia and neurons. Expressed in neutrophils, monocytes and lymphocytes. Enhanced expression seen in pancreatic adenocarcinoma, endometrial cancer, and bladder cancer, as compared to non-cancerous tissue. In bladder cancer, the increase in expression exhibits a striking positive correlation with more advanced stages of the disease.

It localises to the cytoplasm. It is found in the secreted. Ubiquitin-like protein which plays a key role in the innate immune response to viral infection either via its conjugation to a target protein (ISGylation) or via its action as a free or unconjugated protein. ISGylation involves a cascade of enzymatic reactions involving E1, E2, and E3 enzymes which catalyze the conjugation of ISG15 to a lysine residue in the target protein. Its target proteins include IFIT1, MX1/MxA, PPM1B, UBE2L6, UBA7, CHMP5, CHMP2A, CHMP4B and CHMP6. Isgylation of the viral sensor IFIH1/MDA5 promotes IFIH1/MDA5 oligomerization and triggers activation of innate immunity against a range of viruses, including coronaviruses, flaviviruses and picornaviruses. Can also isgylate: EIF2AK2/PKR which results in its activation, RIGI which inhibits its function in antiviral signaling response, EIF4E2 which enhances its cap structure-binding activity and translation-inhibition activity, UBE2N and UBE2E1 which negatively regulates their activity, IRF3 which inhibits its ubiquitination and degradation and FLNB which prevents its ability to interact with the upstream activators of the JNK cascade thereby inhibiting IFNA-induced JNK signaling. Exhibits antiviral activity towards both DNA and RNA viruses, including influenza A, HIV-1 and Ebola virus. Restricts HIV-1 and ebola virus via disruption of viral budding. Inhibits the ubiquitination of HIV-1 Gag and host TSG101 and disrupts their interaction, thereby preventing assembly and release of virions from infected cells. Inhibits Ebola virus budding mediated by the VP40 protein by disrupting ubiquitin ligase activity of NEDD4 and its ability to ubiquitinate VP40. ISGylates influenza A virus NS1 protein which causes a loss of function of the protein and the inhibition of virus replication. The secreted form of ISG15 can: induce natural killer cell proliferation, act as a chemotactic factor for neutrophils and act as a IFN-gamma-inducing cytokine playing an essential role in antimycobacterial immunity. The secreted form acts through the integrin ITGAL/ITGB2 receptor to initiate activation of SRC family tyrosine kinases including LYN, HCK and FGR which leads to secretion of IFNG and IL10; the interaction is mediated by ITGAL. The polypeptide is Ubiquitin-like protein ISG15 (Homo sapiens (Human)).